We begin with the raw amino-acid sequence, 270 residues long: Phosphonates import ATP-binding protein PhnC (270 aa).

Residues 2–245 (LVIEGLTCRF…IARELYDLEA (244 aa)) form the ABC transporter domain. 34 to 41 (GRSGAGKS) serves as a coordination point for ATP.

Belongs to the ABC transporter superfamily. Phosphonates importer (TC 3.A.1.9.1) family. In terms of assembly, the complex is composed of two ATP-binding proteins (PhnC), two transmembrane proteins (PhnE) and a solute-binding protein (PhnD).

It is found in the cell inner membrane. The enzyme catalyses phosphonate(out) + ATP + H2O = phosphonate(in) + ADP + phosphate + H(+). Part of the ABC transporter complex PhnCDE involved in phosphonates import. Responsible for energy coupling to the transport system. The protein is Phosphonates import ATP-binding protein PhnC of Rhodopseudomonas palustris (strain BisB5).